The sequence spans 105 residues: Protein Rev (105 aa).

Ser-5 bears the Phosphoserine; by host CK2 mark. Residues 18–26 (IIKILYQSN) form a homomultimerization region. Over residues 24–35 (QSNPYPDSSQGT) the composition is skewed to polar residues. 2 disordered regions span residues 24–49 (QSNP…WRAR) and 65–105 (LGGP…ATTE). Residues 35-51 (TRQARRNRRRRWRARQR) carry the Nuclear localization signal and RNA-binding (RRE) motif. The segment covering 37–49 (QARRNRRRRWRAR) has biased composition (basic residues). A Nuclear export signal and binding to XPO1 motif is present at residues 74 to 85 (LPLPPLGRLTLD). A compositionally biased stretch (polar residues) spans 95-105 (TESQQGTATTE).

Belongs to the HIV-1 REV protein family. Homomultimer; when bound to the RRE. Multimeric assembly is essential for activity and may involve XPO1. Binds to human KPNB1, XPO1, TNPO1, RANBP5 and IPO7. Interacts with the viral Integrase. Interacts with human KHDRBS1. Interacts with human NAP1; this interaction decreases Rev multimerization and stimulates its activity. Interacts with human DEAD-box helicases DDX3 and DDX24; these interactions may serve for viral RNA export to the cytoplasm and packaging, respectively. Interacts with human PSIP1; this interaction may inhibit HIV-1 DNA integration by promoting dissociation of the Integrase-LEDGF/p75 complex. Post-translationally, asymmetrically arginine dimethylated at one site by host PRMT6. Methylation impairs the RNA-binding activity and export of viral RNA from the nucleus to the cytoplasm. In terms of processing, phosphorylated by protein kinase CK2. Presence of, and maybe binding to the N-terminus of the regulatory beta subunit of CK2 is necessary for CK2-mediated Rev's phosphorylation.

It is found in the host nucleus. The protein localises to the host nucleolus. The protein resides in the host cytoplasm. In terms of biological role, escorts unspliced or incompletely spliced viral pre-mRNAs (late transcripts) out of the nucleus of infected cells. These pre-mRNAs carry a recognition sequence called Rev responsive element (RRE) located in the env gene, that is not present in fully spliced viral mRNAs (early transcripts). This function is essential since most viral proteins are translated from unspliced or partially spliced pre-mRNAs which cannot exit the nucleus by the pathway used by fully processed cellular mRNAs. Rev itself is translated from a fully spliced mRNA that readily exits the nucleus. Rev's nuclear localization signal (NLS) binds directly to KPNB1/Importin beta-1 without previous binding to KPNA1/Importin alpha-1. KPNB1 binds to the GDP bound form of RAN (Ran-GDP) and targets Rev to the nucleus. In the nucleus, the conversion from Ran-GDP to Ran-GTP dissociates Rev from KPNB1 and allows Rev's binding to the RRE in viral pre-mRNAs. Rev multimerization on the RRE via cooperative assembly exposes its nuclear export signal (NES) to the surface. Rev can then form a complex with XPO1/CRM1 and Ran-GTP, leading to nuclear export of the complex. Conversion from Ran-GTP to Ran-GDP mediates dissociation of the Rev/RRE/XPO1/RAN complex, so that Rev can return to the nucleus for a subsequent round of export. Beside KPNB1, also seems to interact with TNPO1/Transportin-1, RANBP5/IPO5 and IPO7/RANBP7 for nuclear import. The nucleoporin-like HRB/RIP is an essential cofactor that probably indirectly interacts with Rev to release HIV RNAs from the perinuclear region to the cytoplasm. In Homo sapiens (Human), this protein is Protein Rev.